The sequence spans 105 residues: Cytochrome c-553-like (105 aa).

The first 29 residues, 1-29 (MAGIVSLVILAVALFSFMNFDPYVSQVLA), serve as a signal peptide directing secretion. Residues C45, C48, H49, and M85 each coordinate heme c.

Binds 1 heme c group covalently per subunit.

The protein is Cytochrome c-553-like (cytM) of Synechocystis sp. (strain ATCC 27184 / PCC 6803 / Kazusa).